The chain runs to 168 residues: MPTLLLGAAIPFGTIAYTLVVFLILLVMLRKFAWGPLMGIMKEREEHVASEIDAAEKNHAEAKKLVEEQREMLKQSRVEAQELIERAKKQAEEQKDGIIAAAKEEAESIKTSAVQEIQREKEQAIATLQEQVASLSVQIASKVIEKELKEEDQVKLIRDYIKEVGEAR.

Residues 9–29 (AIPFGTIAYTLVVFLILLVML) form a helical membrane-spanning segment.

Belongs to the ATPase B chain family. F-type ATPases have 2 components, F(1) - the catalytic core - and F(0) - the membrane proton channel. F(1) has five subunits: alpha(3), beta(3), gamma(1), delta(1), epsilon(1). F(0) has three main subunits: a(1), b(2) and c(10-14). The alpha and beta chains form an alternating ring which encloses part of the gamma chain. F(1) is attached to F(0) by a central stalk formed by the gamma and epsilon chains, while a peripheral stalk is formed by the delta and b chains.

It localises to the cell membrane. F(1)F(0) ATP synthase produces ATP from ADP in the presence of a proton or sodium gradient. F-type ATPases consist of two structural domains, F(1) containing the extramembraneous catalytic core and F(0) containing the membrane proton channel, linked together by a central stalk and a peripheral stalk. During catalysis, ATP synthesis in the catalytic domain of F(1) is coupled via a rotary mechanism of the central stalk subunits to proton translocation. In terms of biological role, component of the F(0) channel, it forms part of the peripheral stalk, linking F(1) to F(0). The protein is ATP synthase subunit b of Bacillus cytotoxicus (strain DSM 22905 / CIP 110041 / 391-98 / NVH 391-98).